The sequence spans 465 residues: Putative ABC transporter ATP-binding protein MG065 homolog (465 aa).

Residues 232–465 form the ABC transporter domain; sequence IELKNVYKYI…PKQVEDINWI (234 aa). ATP is bound at residue 268–275; the sequence is GPSGSGKT.

This sequence belongs to the ABC transporter superfamily.

This Mycoplasma pneumoniae (strain ATCC 29342 / M129 / Subtype 1) (Mycoplasmoides pneumoniae) protein is Putative ABC transporter ATP-binding protein MG065 homolog.